Reading from the N-terminus, the 188-residue chain is Elongation factor P-like protein (188 aa).

This sequence belongs to the elongation factor P family.

This chain is Elongation factor P-like protein, found in Aliivibrio fischeri (strain ATCC 700601 / ES114) (Vibrio fischeri).